A 2006-amino-acid polypeptide reads, in one-letter code: E3 ubiquitin-protein ligase PRT6 (2006 aa).

A UBR-type zinc finger spans residues G119 to G189. Disordered stretches follow at residues L1167 to V1186 and D1338 to D1380. Residues D1338 to S1348 show a composition bias toward basic and acidic residues. A compositionally biased stretch (polar residues) spans E1349 to Q1360. Residues P1364–A1377 are compositionally biased toward basic and acidic residues. An RING-type; degenerate zinc finger spans residues C1395–R1440.

It belongs to the E3 ubiquitin-protein ligase UBR1-like family.

The catalysed reaction is S-ubiquitinyl-[E2 ubiquitin-conjugating enzyme]-L-cysteine + [acceptor protein]-L-lysine = [E2 ubiquitin-conjugating enzyme]-L-cysteine + N(6)-ubiquitinyl-[acceptor protein]-L-lysine.. Its pathway is protein modification; protein ubiquitination. Functionally, ubiquitin protein ligase which is a component of the N-end rule pathway with arginine specificity, and functions with the arginyltransferases ATE1 and ATE2. Recognizes and binds to proteins bearing specific N-terminal residues that are destabilizing according to the N-end rule, leading to their ubiquitination and subsequent degradation. Does not participate in degradation of proteins with N-terminal Phe or Leu. The N-end rule pathway regulates seed after-ripening, seedling sugar sensitivity, seedling lipid breakdown, and abscisic acid (ABA) sensitivity of germination. The N-end rule pathway regulates various aspects of leaf and shoot development. Involved in the ubiquitination and subsequent degradation of RAP2-12, an activator of hypoxic gene expression. The ubiquitination occurs after the N-arginylation of RAP2-12 by ATE1 or ATE2 under aerobic conditions. The end-rule pathway plays a role in regulating the timing and amplitude of the immune response following infection with the bacterial pathogen Pseudomonas syringae pv tomato. Regulates the biosynthesis of plant-defense metabolites such as glucosinolates, and the biosynthesis and response to the phytohormone jasmonate (JA), which plays a key role in plant immunity. Controls the expression of specific defense-response genes, activates the synthesis pathway for the phytoalexin camalexin, and influences basal resistance to the hemibiotroph pathogen Pseudomonas syringae pv tomato. Coordinates the mobilization of seed storage reserves and regulates the abundance and activities of several proteases following seed germination. The sequence is that of E3 ubiquitin-protein ligase PRT6 from Arabidopsis thaliana (Mouse-ear cress).